A 99-amino-acid chain; its full sequence is Evasin P1162 (99 aa).

The first 28 residues, 1 to 28 (MEVKTFAFLQIAVCIAIGIELICAGTNA), serve as a signal peptide directing secretion. 3 cysteine pairs are disulfide-bonded: Cys-40/Cys-59, Cys-44/Cys-61, and Cys-55/Cys-72. Asn-43, Asn-49, Asn-58, and Asn-85 each carry an N-linked (GlcNAc...) asparagine glycan.

It localises to the secreted. Its function is as follows. Salivary chemokine-binding protein which binds to host chemokines CXCL1, CXCL2, CXCL3, CXCL5 and CXCL8. The chain is Evasin P1162 from Ixodes ricinus (Common tick).